A 734-amino-acid chain; its full sequence is Photosystem I P700 chlorophyll a apoprotein A2 (734 aa).

A run of 8 helical transmembrane segments spans residues 46-69, 135-158, 175-199, 273-291, 330-353, 369-395, 417-439, and 517-535; these read IFAS…FHVA, LYTG…LHLQ, LNHH…HVAI, MAHH…GHMY, IHFQ…QHMY, AALY…IFFI, AIIS…LYVH, and FLVH…LILV. 2 residues coordinate [4Fe-4S] cluster: Cys559 and Cys568. 2 consecutive transmembrane segments (helical) span residues 575 to 596 and 643 to 665; these read AFYL…YWHW and LSVW…MFLI. Positions 654, 662, and 670 each coordinate chlorophyll a. Trp671 lines the phylloquinone pocket. A helical transmembrane segment spans residues 707-727; sequence LVGLAHFSVGYIFTYAAFLIA.

Belongs to the PsaA/PsaB family. The PsaA/B heterodimer binds the P700 chlorophyll special pair and subsequent electron acceptors. PSI consists of a core antenna complex that captures photons, and an electron transfer chain that converts photonic excitation into a charge separation. The eukaryotic PSI reaction center is composed of at least 11 subunits. The cofactor is P700 is a chlorophyll a/chlorophyll a' dimer, A0 is one or more chlorophyll a, A1 is one or both phylloquinones and FX is a shared 4Fe-4S iron-sulfur center..

The protein resides in the plastid. It is found in the chloroplast thylakoid membrane. The catalysed reaction is reduced [plastocyanin] + hnu + oxidized [2Fe-2S]-[ferredoxin] = oxidized [plastocyanin] + reduced [2Fe-2S]-[ferredoxin]. Its function is as follows. PsaA and PsaB bind P700, the primary electron donor of photosystem I (PSI), as well as the electron acceptors A0, A1 and FX. PSI is a plastocyanin-ferredoxin oxidoreductase, converting photonic excitation into a charge separation, which transfers an electron from the donor P700 chlorophyll pair to the spectroscopically characterized acceptors A0, A1, FX, FA and FB in turn. Oxidized P700 is reduced on the lumenal side of the thylakoid membrane by plastocyanin. The sequence is that of Photosystem I P700 chlorophyll a apoprotein A2 from Helianthus annuus (Common sunflower).